The chain runs to 296 residues: 4-hydroxy-tetrahydrodipicolinate synthase (296 aa).

Position 49 (T49) interacts with pyruvate. Catalysis depends on Y137, which acts as the Proton donor/acceptor. K165 functions as the Schiff-base intermediate with substrate in the catalytic mechanism. Residue I208 participates in pyruvate binding.

This sequence belongs to the DapA family. As to quaternary structure, homotetramer; dimer of dimers.

Its subcellular location is the cytoplasm. It catalyses the reaction L-aspartate 4-semialdehyde + pyruvate = (2S,4S)-4-hydroxy-2,3,4,5-tetrahydrodipicolinate + H2O + H(+). The protein operates within amino-acid biosynthesis; L-lysine biosynthesis via DAP pathway; (S)-tetrahydrodipicolinate from L-aspartate: step 3/4. In terms of biological role, catalyzes the condensation of (S)-aspartate-beta-semialdehyde [(S)-ASA] and pyruvate to 4-hydroxy-tetrahydrodipicolinate (HTPA). The sequence is that of 4-hydroxy-tetrahydrodipicolinate synthase from Ehrlichia canis (strain Jake).